The sequence spans 693 residues: Elongation factor G (693 aa).

Residues 8–282 (EKTRNIGIMA…AVIDYLPSPL (275 aa)) form the tr-type G domain. GTP-binding positions include 17–24 (AHVDAGKT), 81–85 (DTPGH), and 135–138 (NKMD).

Belongs to the TRAFAC class translation factor GTPase superfamily. Classic translation factor GTPase family. EF-G/EF-2 subfamily.

It is found in the cytoplasm. In terms of biological role, catalyzes the GTP-dependent ribosomal translocation step during translation elongation. During this step, the ribosome changes from the pre-translocational (PRE) to the post-translocational (POST) state as the newly formed A-site-bound peptidyl-tRNA and P-site-bound deacylated tRNA move to the P and E sites, respectively. Catalyzes the coordinated movement of the two tRNA molecules, the mRNA and conformational changes in the ribosome. The sequence is that of Elongation factor G from Streptococcus gordonii (strain Challis / ATCC 35105 / BCRC 15272 / CH1 / DL1 / V288).